The chain runs to 456 residues: DEAD-box ATP-dependent RNA helicase 10 (456 aa).

Residues 9 to 37 carry the Q motif motif; it reads KTFAELGVREELVKACERLGWKNPSKIQA. The 184-residue stretch at 40 to 223 folds into the Helicase ATP-binding domain; it reads LPFALEGKDV…RACLRNPVKI (184 aa). 53–60 contributes to the ATP binding site; that stretch reads AQTGSGKT. A DEAD box motif is present at residues 171-174; the sequence is DEAD. The Helicase C-terminal domain maps to 250 to 394; sequence YLVYILSEMP…EYPAEEDEVL (145 aa). The segment at 407–456 is disordered; sequence SAMNMKESGGRKRRGEDDEESERFLGGNKDRGNKERGGNKDKKSSKKFKR. A compositionally biased stretch (basic and acidic residues) spans 434-448; the sequence is NKDRGNKERGGNKDK.

Belongs to the DEAD box helicase family. DDX47/RRP3 subfamily. As to expression, expressed in all tissues and organs examined including root, cotyledon, first and second leaves, third and fourth leaves, fifth and sixth leaves, shoot apex, flower, flower bud, cauline leaf and rosette leaves.

Its subcellular location is the nucleus. The protein resides in the nucleolus. The catalysed reaction is ATP + H2O = ADP + phosphate + H(+). Functionally, involved in leaf polarity establishment by functioning cooperatively with AS2 to repress abaxial genes ARF3, ARF4, KAN1, KAN2, YAB1 and YAB5, and the knox homeobox genes KNAT1, KNAT2, KNAT6, and STM to promote adaxial development in leaf primordia at shoot apical meristems at high temperatures. Involved in the processing of pre-rRNA intermediates at high temperatures. This chain is DEAD-box ATP-dependent RNA helicase 10 (RH10), found in Arabidopsis thaliana (Mouse-ear cress).